The chain runs to 778 residues: MAGDDLIAKFQALGMSEQKAKETLKNANVTKNLQLSLAAAGSATLSDGTGMLIYHMATKLKPQTADHLPLLVRYIVEHKLDNTQRVDAALEYLLKCGQSLNANIDLQALEKECGVGVVVTPEQIERTVQAKIKASYKEALLEQRYHFNSFKILQDVRGELKWADAKSVKAAIDVEIFDLLGPKTEADLKPQTKANDKPKAAKPKAEVTPAAQTAEAASDGATTISELMKTKVHFHAPGENFKADGYVVTEHTERLLKEHLARTGGKVHTRFPPEPNGILHIGHAKAININFGYAAAHDGVCYLRYDDTNPEKEEEKFFLAIKEMVEWLGYKPFKITYSSDNFQQLYEWAVVLINKGLAYVCHQKAEELKGFNPKPSPWRERPIEESLRLFEDMKRGKIDEGAATLRMKVTLEEGKMDPVAYRIKFISHHRTGSDWCIYPTYDYTHCLCDSLEDITHSLCTKEFQSRRSSYYWLCNALGIYCPVQWEYGRLNMNYALVSKRKIAKLITEQIVHDWDDPRLFTLTALRRRGFPAEAINNFCAQMGVTGAQIAVDPAMLEAAVRDVLNVTAPRRLVVLEPLKVTIKNFPHAAPVQLEVPDFPQNPQQGTHKITLDKVIYIEQGDFKLEPEKGYRRLAPKQSVGLRHAGLVISVDEIVKDPATGQVVELICTSQPAEQAEKPKAFVQWVSQPIQLEVRLYEQLFKHKNPEDPNEVPGGFLSDISEQSMSVVVAFADRALNQAKVYDKFQFERIGFFSVDPDTSANHLVFNRTVGLKEDAGKK.

Positions 188-205 (LKPQTKANDKPKAAKPKA) are enriched in basic and acidic residues. A disordered region spans residues 188 to 219 (LKPQTKANDKPKAAKPKAEVTPAAQTAEAASD). Residues 273-283 (PEPNGILHIGH) carry the 'HIGH' region motif. Residues 274-276 (EPN) and 280-286 (HIGHAKA) contribute to the ATP site. Residues aspartate 306 and tyrosine 441 each coordinate L-glutamine. Residues threonine 460, 489-490 (RL), and 497-499 (VSK) each bind ATP. The 'KMSKS' region signature appears at 496–500 (LVSKR).

This sequence belongs to the class-I aminoacyl-tRNA synthetase family.

The catalysed reaction is tRNA(Gln) + L-glutamine + ATP = L-glutaminyl-tRNA(Gln) + AMP + diphosphate. This chain is Probable glutamine--tRNA ligase, found in Drosophila melanogaster (Fruit fly).